The sequence spans 230 residues: Capsid protein (230 aa).

Positions 19 to 48 are enriched in low complexity; the sequence is PPTSDAASPSADQPAVSSSRSDSRLVSAPL. The tract at residues 19–54 is disordered; sequence PPTSDAASPSADQPAVSSSRSDSRLVSAPLPAAPPA.

The protein belongs to the tymoviruses capsid protein family.

The protein localises to the virion. In terms of biological role, self-assembles to form a T=3 icosahedral capsid composed of 180 copies of the capsid protein. The capsid encapsulates the single-stranded RNA genome. This Grapevine fleck virus (isolate Italy/MT48) (GFkV) protein is Capsid protein.